Reading from the N-terminus, the 518-residue chain is MNEFWQHCSALLERELTPQQYVTWIKPLAPVAFDADANTLSIAAPNRFKLDWVKSQFSGRITDLARDFWHSPVDVQFVLDPKAGMRTAPAAPSRPPSAGVRNAAAAVDAAVGAVQAAHSARGGGMPGLGMPTNAAQLTDDAADLDLPSLDANEAAAARRTWRPGAAAQAAGGESDSTYERSKLNPVLTFDNFVTGKANQLARAAAIQVADNPGISYNPLFLYGGVGLGKTHLIHAIGNQLLMDKPGARIRYIHAEQYVSDVVKAYQRKAFDDFKRYYHSLDLLLIDDIQFFSGKSRTQEEFFYAFEALVANKAQVIITSDTYPKEISGIDDRLISRFDSGLTVAIEPPELEMRVAILMRKAQSEGVNLNEDVAFFVAKHLRSNVRELEGALRKILAYSKFHGREITIELTKEALKDLLTVQNRQISVENIQKTVADFYSIKVADMYSKKRPANIARPRQIAMYLAKELTQKSLPEIGELFGGRDHTTVLHAVRKIADERGKDAQLNHELHVLEQTLKG.

Positions 1-72 (MNEFWQHCSA…DLARDFWHSP (72 aa)) are domain I, interacts with DnaA modulators. A domain II region spans residues 72-181 (PVDVQFVLDP…GESDSTYERS (110 aa)). The tract at residues 155–178 (AAARRTWRPGAAAQAAGGESDSTY) is disordered. The domain III, AAA+ region stretch occupies residues 182 to 398 (KLNPVLTFDN…GALRKILAYS (217 aa)). ATP is bound by residues glycine 226, glycine 228, lysine 229, and threonine 230. The domain IV, binds dsDNA stretch occupies residues 399-518 (KFHGREITIE…LHVLEQTLKG (120 aa)).

This sequence belongs to the DnaA family. Oligomerizes as a right-handed, spiral filament on DNA at oriC.

The protein localises to the cytoplasm. Its function is as follows. Plays an essential role in the initiation and regulation of chromosomal replication. ATP-DnaA binds to the origin of replication (oriC) to initiate formation of the DNA replication initiation complex once per cell cycle. Binds the DnaA box (a 9 base pair repeat at the origin) and separates the double-stranded (ds)DNA. Forms a right-handed helical filament on oriC DNA; dsDNA binds to the exterior of the filament while single-stranded (ss)DNA is stabiized in the filament's interior. The ATP-DnaA-oriC complex binds and stabilizes one strand of the AT-rich DNA unwinding element (DUE), permitting loading of DNA polymerase. After initiation quickly degrades to an ADP-DnaA complex that is not apt for DNA replication. Binds acidic phospholipids. In Paraburkholderia phymatum (strain DSM 17167 / CIP 108236 / LMG 21445 / STM815) (Burkholderia phymatum), this protein is Chromosomal replication initiator protein DnaA.